The primary structure comprises 166 residues: Phospholipase A2 myotoxin inhibitor protein (166 aa).

The N-terminal stretch at 1–19 (MRLILLSGLLLLGTFLANG) is a signal peptide. Positions 46 to 161 (LKYAFLTVHK…CDDNLLVVCE (116 aa)) constitute a C-type lectin domain. Disulfide bonds link cysteine 83/cysteine 160 and cysteine 138/cysteine 152. Asparagine 122 is a glycosylation site (N-linked (GlcNAc...) asparagine).

This sequence belongs to the alpha-type phospholipase A2 inhibitor family. Oligomer. Homotrimer; non-covalently linked. Post-translationally, glycosylated. The glycosylation has no role in the association of this PLI and PA2 enzyme. As to expression, expressed by the liver.

It localises to the secreted. This phospholipase A2 inhibitor binds directly phospholipase A2 in the presence or absence of calcium. Has anti-enzymatic, anti-myotoxic, anti-edema inducing, anti-cytotoxic, anti-bactericidal, and anti-lethal properties against basic and acidic phospholipases A2 from Bothrops venoms. This Bothrops moojeni (Lance-headed viper) protein is Phospholipase A2 myotoxin inhibitor protein.